The following is a 243-amino-acid chain: DNA repair protein RecO (243 aa).

Belongs to the RecO family.

Its function is as follows. Involved in DNA repair and RecF pathway recombination. The chain is DNA repair protein RecO from Thermobifida fusca (strain YX).